The primary structure comprises 216 residues: Octanoyltransferase (216 aa).

The BPL/LPL catalytic domain maps to 33-216; the sequence is AQTADELWIV…AEKLTRHLSG (184 aa). Substrate-binding positions include 72–79, 148–150, and 162–164; these read RGGEVTYH, ALG, and GVS. The active-site Acyl-thioester intermediate is C180.

The protein belongs to the LipB family.

It localises to the cytoplasm. It carries out the reaction octanoyl-[ACP] + L-lysyl-[protein] = N(6)-octanoyl-L-lysyl-[protein] + holo-[ACP] + H(+). Its pathway is protein modification; protein lipoylation via endogenous pathway; protein N(6)-(lipoyl)lysine from octanoyl-[acyl-carrier-protein]: step 1/2. Catalyzes the transfer of endogenously produced octanoic acid from octanoyl-acyl-carrier-protein onto the lipoyl domains of lipoate-dependent enzymes. Lipoyl-ACP can also act as a substrate although octanoyl-ACP is likely to be the physiological substrate. This Herminiimonas arsenicoxydans protein is Octanoyltransferase.